The primary structure comprises 383 residues: Soluble hydrogenase 42 kDa subunit (383 aa).

Lysine 194 is subject to N6-(pyridoxal phosphate)lysine.

Belongs to the class-V pyridoxal-phosphate-dependent aminotransferase family. In terms of assembly, heterodimer of a large and a small subunit. It depends on pyridoxal 5'-phosphate as a cofactor.

It localises to the cytoplasm. Soluble hydrogenase catalyzes both production and consumption of hydrogen from suitable artificial electron donors or acceptors. This subunit catalyzes the tritium-exchange activity. In Anabaena cylindrica, this protein is Soluble hydrogenase 42 kDa subunit.